The primary structure comprises 386 residues: Succinyl-diaminopimelate desuccinylase (386 aa).

His72 is a Zn(2+) binding site. The active site involves Asp74. Position 105 (Asp105) interacts with Zn(2+). The Proton acceptor role is filled by Glu139. 3 residues coordinate Zn(2+): Glu140, Glu168, and His353.

The protein belongs to the peptidase M20A family. DapE subfamily. Homodimer. Zn(2+) is required as a cofactor. It depends on Co(2+) as a cofactor.

The enzyme catalyses N-succinyl-(2S,6S)-2,6-diaminopimelate + H2O = (2S,6S)-2,6-diaminopimelate + succinate. Its pathway is amino-acid biosynthesis; L-lysine biosynthesis via DAP pathway; LL-2,6-diaminopimelate from (S)-tetrahydrodipicolinate (succinylase route): step 3/3. Functionally, catalyzes the hydrolysis of N-succinyl-L,L-diaminopimelic acid (SDAP), forming succinate and LL-2,6-diaminopimelate (DAP), an intermediate involved in the bacterial biosynthesis of lysine and meso-diaminopimelic acid, an essential component of bacterial cell walls. The polypeptide is Succinyl-diaminopimelate desuccinylase (Rhodospirillum centenum (strain ATCC 51521 / SW)).